Here is a 200-residue protein sequence, read N- to C-terminus: Imidazole glycerol phosphate synthase subunit HisH (200 aa).

The region spanning 2-200 (KVAIVEYGVG…LGEVLTGASR (199 aa)) is the Glutamine amidotransferase type-1 domain. Residue cysteine 79 is the Nucleophile of the active site. Residues histidine 179 and glutamate 181 contribute to the active site.

Heterodimer of HisH and HisF.

It localises to the cytoplasm. It carries out the reaction 5-[(5-phospho-1-deoxy-D-ribulos-1-ylimino)methylamino]-1-(5-phospho-beta-D-ribosyl)imidazole-4-carboxamide + L-glutamine = D-erythro-1-(imidazol-4-yl)glycerol 3-phosphate + 5-amino-1-(5-phospho-beta-D-ribosyl)imidazole-4-carboxamide + L-glutamate + H(+). It catalyses the reaction L-glutamine + H2O = L-glutamate + NH4(+). It functions in the pathway amino-acid biosynthesis; L-histidine biosynthesis; L-histidine from 5-phospho-alpha-D-ribose 1-diphosphate: step 5/9. IGPS catalyzes the conversion of PRFAR and glutamine to IGP, AICAR and glutamate. The HisH subunit catalyzes the hydrolysis of glutamine to glutamate and ammonia as part of the synthesis of IGP and AICAR. The resulting ammonia molecule is channeled to the active site of HisF. The sequence is that of Imidazole glycerol phosphate synthase subunit HisH from Methanopyrus kandleri (strain AV19 / DSM 6324 / JCM 9639 / NBRC 100938).